The following is a 279-amino-acid chain: Probable endonuclease 4 (279 aa).

His69, His109, Glu145, Asp179, His182, His216, Asp229, His231, and Glu261 together coordinate Zn(2+).

The protein belongs to the AP endonuclease 2 family. The cofactor is Zn(2+).

It carries out the reaction Endonucleolytic cleavage to 5'-phosphooligonucleotide end-products.. In terms of biological role, endonuclease IV plays a role in DNA repair. It cleaves phosphodiester bonds at apurinic or apyrimidinic (AP) sites, generating a 3'-hydroxyl group and a 5'-terminal sugar phosphate. The protein is Probable endonuclease 4 of Serratia proteamaculans (strain 568).